The primary structure comprises 113 residues: Large ribosomal subunit protein bL19 (113 aa).

This sequence belongs to the bacterial ribosomal protein bL19 family.

This protein is located at the 30S-50S ribosomal subunit interface and may play a role in the structure and function of the aminoacyl-tRNA binding site. This chain is Large ribosomal subunit protein bL19, found in Mycobacterium sp. (strain JLS).